A 220-amino-acid polypeptide reads, in one-letter code: uncharacterized protein (220 aa).

Transmembrane regions (helical) follow at residues 61–81, 85–105, 115–135, and 150–170; these read LISVLTIPFYVAIIIFISFFG, SVMFSVIILGSVLISTCYGAF, FVIIQLVFLIYDLILITILLL, and LPLEDIPFGTDQVLLGCSLLL.

The protein localises to the membrane. This is an uncharacterized protein from Caenorhabditis elegans.